A 308-amino-acid chain; its full sequence is SAP30-binding protein (308 aa).

The interval 15–101 is disordered; the sequence is AEDSEPESDG…EAEKRDPQEL (87 aa). Residues 16 to 26 show a composition bias toward acidic residues; that stretch reads EDSEPESDGEA. Residues Ser18, Ser22, Ser43, and Ser52 each carry the phosphoserine modification. The span at 57 to 78 shows a compositional bias: acidic residues; it reads DEDGYEEEEDENSRQSEDDDSE. The segment covering 79–99 has biased composition (basic and acidic residues); that stretch reads TEKPEADDPKDNTEAEKRDPQ. Lys95 is covalently cross-linked (Glycyl lysine isopeptide (Lys-Gly) (interchain with G-Cter in SUMO2)). Position 113 is a phosphoserine (Ser113). Glycyl lysine isopeptide (Lys-Gly) (interchain with G-Cter in SUMO2) cross-links involve residues Lys220, Lys304, and Lys305.

Belongs to the HCNGP family. In terms of assembly, interacts with histone deacetylase complex subunit SAP30.

Its subcellular location is the nucleus. Its function is as follows. Plays a role in transcriptional repression by promoting histone deacetylase activity, leading to deacetylation of histone H3. May be involved in the regulation of beta-2-microglobulin genes. Functionally, (Microbial infection) Involved in transcriptional repression of HHV-1 genes TK and gC. The protein is SAP30-binding protein of Homo sapiens (Human).